Here is a 206-residue protein sequence, read N- to C-terminus: Ribosomal RNA small subunit methyltransferase G (206 aa).

Residues glycine 73, leucine 78, 124 to 125, and arginine 139 each bind S-adenosyl-L-methionine; that span reads VE.

It belongs to the methyltransferase superfamily. RNA methyltransferase RsmG family.

The protein resides in the cytoplasm. It catalyses the reaction guanosine(527) in 16S rRNA + S-adenosyl-L-methionine = N(7)-methylguanosine(527) in 16S rRNA + S-adenosyl-L-homocysteine. Specifically methylates the N7 position of guanine in position 527 of 16S rRNA. The sequence is that of Ribosomal RNA small subunit methyltransferase G from Photorhabdus laumondii subsp. laumondii (strain DSM 15139 / CIP 105565 / TT01) (Photorhabdus luminescens subsp. laumondii).